The primary structure comprises 499 residues: Cytochrome P450 76T24 (499 aa).

The helical transmembrane segment at V3–T23 threads the bilayer. N-linked (GlcNAc...) asparagine glycans are attached at residues N55, N76, N279, and N284. A heme-binding site is contributed by C442.

It belongs to the cytochrome P450 family.

It localises to the membrane. In Catharanthus roseus (Madagascar periwinkle), this protein is Cytochrome P450 76T24.